The sequence spans 187 residues: Homeobox expressed in ES cells 1-B (187 aa).

The homeobox DNA-binding region spans 110–169 (GRRPRTAFTRSQIEILENVFRVNSYPGIDVREELASKLALDEDRIQIWFQNRRAKLKRSH).

The protein belongs to the ANF homeobox family. In terms of assembly, the N-terminus interacts with the LIM 2 domain of zyx. As to expression, first expressed at a low level in the late blastula stage (stage 9) in most cells of the animal half of the embryo. Following this, predominantly expressed in two zones; the dorsal blastopore lip (Spemann organizer) at the beginning of gastrulation, and subsequently in the anterior part of the neural anlage (the region of future forebrain).

Its subcellular location is the nucleus. Regulates the earliest stages of development of the anterior neural plate. Plays a role in forebrain development by inhibiting the expression of otx2 and pax6 in the rostral region of the anterior neural plate. Necessary for both neural differentiation and neural patterning. Controls Spemann organizer development. May act as a transcriptional repressor. The chain is Homeobox expressed in ES cells 1-B (hesx1-b) from Xenopus laevis (African clawed frog).